We begin with the raw amino-acid sequence, 293 residues long: 3-methyl-2-oxobutanoate hydroxymethyltransferase (293 aa).

The interval 1 to 25 (MTDSPTAGTPYGTLPPASPLPQRRP) is disordered. Mg(2+)-binding residues include D67 and D110. Residues 67 to 68 (DS), D110, and K139 contribute to the 3-methyl-2-oxobutanoate site. E141 lines the Mg(2+) pocket. The active-site Proton acceptor is the E208.

Belongs to the PanB family. In terms of assembly, homodecamer; pentamer of dimers. It depends on Mg(2+) as a cofactor.

Its subcellular location is the cytoplasm. The enzyme catalyses 3-methyl-2-oxobutanoate + (6R)-5,10-methylene-5,6,7,8-tetrahydrofolate + H2O = 2-dehydropantoate + (6S)-5,6,7,8-tetrahydrofolate. It participates in cofactor biosynthesis; (R)-pantothenate biosynthesis; (R)-pantoate from 3-methyl-2-oxobutanoate: step 1/2. Functionally, catalyzes the reversible reaction in which hydroxymethyl group from 5,10-methylenetetrahydrofolate is transferred onto alpha-ketoisovalerate to form ketopantoate. This Acidovorax sp. (strain JS42) protein is 3-methyl-2-oxobutanoate hydroxymethyltransferase.